Consider the following 100-residue polypeptide: MIPKNPRQLADLVLKPIITEKATRLLENNKYVFEVVPQATKPDIKAAIESLFDVSVIKVNTVRPPRKKKRVGRFIGYKPLYKRAIVTLQDGDTITLFPEV.

It belongs to the universal ribosomal protein uL23 family. Part of the 50S ribosomal subunit. Contacts protein L29, and trigger factor when it is bound to the ribosome.

Its function is as follows. One of the early assembly proteins it binds 23S rRNA. One of the proteins that surrounds the polypeptide exit tunnel on the outside of the ribosome. Forms the main docking site for trigger factor binding to the ribosome. The polypeptide is Large ribosomal subunit protein uL23 (Rippkaea orientalis (strain PCC 8801 / RF-1) (Cyanothece sp. (strain PCC 8801))).